The following is a 312-amino-acid chain: DNA-directed RNA polymerase subunit alpha (312 aa).

The tract at residues 1-229 (MLQYQIDRID…ELFQPLATVT (229 aa)) is alpha N-terminal domain (alpha-NTD). Residues 241 to 312 (SPEAQIPLEE…ISIPQSRTSV (72 aa)) are alpha C-terminal domain (alpha-CTD).

The protein belongs to the RNA polymerase alpha chain family. In cyanobacteria the RNAP catalytic core is composed of 2 alpha, 1 beta, 1 beta', 1 gamma and 1 omega subunit. When a sigma factor is associated with the core the holoenzyme is formed, which can initiate transcription.

The catalysed reaction is RNA(n) + a ribonucleoside 5'-triphosphate = RNA(n+1) + diphosphate. Functionally, DNA-dependent RNA polymerase catalyzes the transcription of DNA into RNA using the four ribonucleoside triphosphates as substrates. This chain is DNA-directed RNA polymerase subunit alpha, found in Prochlorococcus marinus (strain MIT 9215).